The chain runs to 474 residues: PRAME family member 17 (474 aa).

An LRR 1; degenerate repeat occupies 97 to 124 (RWKLQVLDLRDVDGNFWTIWSGARALSC). The stretch at 179 to 203 (HLCCNKVQNYSMPTSSFRNLLKRVY) is one LRR 2; degenerate repeat. The LRR 3; degenerate repeat unit spans residues 204-230 (PDSIQELEIKRKCSLNKTGKFAPYLSQ). The LRR 4; degenerate repeat unit spans residues 231–265 (MSNLRKLFLAFGYDDELYVSGQQQFVPDLDCPFLC). LRR repeat units lie at residues 266 to 291 (LYYPQMLYIRKISNIKEHLEHLLRCL), 292 to 323 (KNPLGTFIFCHAYLADQDMECLSQYPSLSQLK), 324 to 342 (ELHLIHILMWTTNLEPLGA), 348 to 375 (AATLEILTLKDCQIQDSQLRVLLPALSR), and 376 to 400 (CSQLTTFYFRGNETSTNALKDLLCH).

It belongs to the PRAME family.

In Homo sapiens (Human), this protein is PRAME family member 17.